A 485-amino-acid polypeptide reads, in one-letter code: D-alanine--D-alanyl carrier protein ligase (485 aa).

ATP is bound at residue 144 to 145 (TS). Residue aspartate 189 participates in D-alanine binding. An ATP-binding site is contributed by 284-289 (NTYGPT). Position 293 (valine 293) interacts with D-alanine. Residues aspartate 365 and lysine 473 each coordinate ATP. Lysine 473 contributes to the D-alanine binding site.

Belongs to the ATP-dependent AMP-binding enzyme family. DltA subfamily.

Its subcellular location is the cytoplasm. The enzyme catalyses holo-[D-alanyl-carrier protein] + D-alanine + ATP = D-alanyl-[D-alanyl-carrier protein] + AMP + diphosphate. The protein operates within cell wall biogenesis; lipoteichoic acid biosynthesis. Functionally, catalyzes the first step in the D-alanylation of lipoteichoic acid (LTA), the activation of D-alanine and its transfer onto the D-alanyl carrier protein (Dcp) DltC. In an ATP-dependent two-step reaction, forms a high energy D-alanyl-AMP intermediate, followed by transfer of the D-alanyl residue as a thiol ester to the phosphopantheinyl prosthetic group of the Dcp. D-alanylation of LTA plays an important role in modulating the properties of the cell wall in Gram-positive bacteria, influencing the net charge of the cell wall. In Staphylococcus aureus (strain Mu3 / ATCC 700698), this protein is D-alanine--D-alanyl carrier protein ligase.